Here is a 179-residue protein sequence, read N- to C-terminus: GTP-dependent dephospho-CoA kinase (179 aa).

Residues Asp55, Val57, Asp74, Lys76, and Glu128 each coordinate GTP.

It belongs to the GTP-dependent DPCK family.

The catalysed reaction is 3'-dephospho-CoA + GTP = GDP + CoA + H(+). Its pathway is cofactor biosynthesis; coenzyme A biosynthesis. Catalyzes the GTP-dependent phosphorylation of the 3'-hydroxyl group of dephosphocoenzyme A to form coenzyme A (CoA). This chain is GTP-dependent dephospho-CoA kinase, found in Saccharolobus islandicus (strain M.16.4 / Kamchatka #3) (Sulfolobus islandicus).